A 458-amino-acid chain; its full sequence is 3-isopropylmalate dehydratase large subunit (458 aa).

The [4Fe-4S] cluster site is built by C339, C399, and C402.

The protein belongs to the aconitase/IPM isomerase family. LeuC type 1 subfamily. As to quaternary structure, heterodimer of LeuC and LeuD. [4Fe-4S] cluster serves as cofactor.

It catalyses the reaction (2R,3S)-3-isopropylmalate = (2S)-2-isopropylmalate. It participates in amino-acid biosynthesis; L-leucine biosynthesis; L-leucine from 3-methyl-2-oxobutanoate: step 2/4. In terms of biological role, catalyzes the isomerization between 2-isopropylmalate and 3-isopropylmalate, via the formation of 2-isopropylmaleate. This chain is 3-isopropylmalate dehydratase large subunit, found in Lactococcus lactis subsp. cremoris (strain SK11).